The primary structure comprises 424 residues: MAALVALHGVVRRPLLRGLLQEVRCLERSYASKPTLNEVVIVSAIRTPIGSFLGSLASQPATKLGTAAIQGAIEKAGIPKEEVKEVYMGNVIQGGEGQAPTRQATLGAGLPISTPCTTVNKVCASGMKAIMMASQSLMCGHQDVMVAGGMESMSNVPYVMSRGATPYGGVKLEDLIVKDGLTDVYNKIHMGNCAENTAKKMNISRQEQDTYALSSYTRSKEAWDAGKFASEITPITISVKGKPDVVVKEDEEYKRVDFSKVPKLKTVFQKENGTITAANASTLNDGAAALVLMTAEAAQRLNVKPLARIAAFADAAVDPIDFPLAPAYAVPKVLKYAGLKKEDIAMWEVNEAFSVVVLANIKMLEIDPQKVNIHGGAVSLGHPIGMSGARIVVHMAHALKPGEFGLASICNGGGGASALLIEKL.

Residues 1-30 (MAALVALHGVVRRPLLRGLLQEVRCLERSY) constitute a mitochondrion transit peptide. Lysine 63 carries the post-translational modification N6-acetyllysine; alternate. Lysine 63 carries the post-translational modification N6-succinyllysine; alternate. Lysine 75 bears the N6-succinyllysine mark. Residue cysteine 123 is the Acyl-thioester intermediate of the active site. 4 positions are modified to N6-acetyllysine; alternate: lysine 171, lysine 178, lysine 187, and lysine 199. An N6-succinyllysine; alternate mark is found at lysine 171, lysine 178, lysine 187, and lysine 199. Serine 204 bears the Phosphoserine mark. A CoA-binding site is contributed by tyrosine 216. A K(+)-binding site is contributed by tyrosine 216. 2 positions are modified to N6-acetyllysine; alternate: lysine 220 and lysine 227. Lysine 220 and lysine 227 each carry N6-succinyllysine; alternate. At lysine 240 the chain carries N6-succinyllysine. Lysine 242 is subject to N6-acetyllysine; alternate. The residue at position 242 (lysine 242) is an N6-succinyllysine; alternate. Lysine 248 and lysine 254 each carry N6-acetyllysine. CoA-binding positions include 255-257 (RVD) and lysine 260. Lysine 260 is modified (N6-acetyllysine; alternate). Position 260 is an N6-succinyllysine; alternate (lysine 260). Residues lysine 263 and lysine 265 each carry the N6-succinyllysine modification. Lysine 270 bears the N6-acetyllysine mark. 3 residues coordinate K(+): alanine 277, alanine 278, and alanine 280. Serine 281 serves as a coordination point for CoA. At lysine 335 the chain carries N6-acetyllysine. Position 378 (valine 378) interacts with K(+). Residue cysteine 410 is the Proton donor/acceptor of the active site.

It belongs to the thiolase-like superfamily. Thiolase family. As to quaternary structure, homotetramer. Post-translationally, succinylation at Lys-265, adjacent to a coenzyme A binding site. Desuccinylated by SIRT5.

Its subcellular location is the mitochondrion. It carries out the reaction 2 acetyl-CoA = acetoacetyl-CoA + CoA. The catalysed reaction is propanoyl-CoA + acetyl-CoA = 2-methyl-3-oxobutanoyl-CoA + CoA. Its pathway is lipid metabolism; fatty acid beta-oxidation. With respect to regulation, activated by potassium ions, but not sodium ions. Its function is as follows. This is one of the enzymes that catalyzes the last step of the mitochondrial beta-oxidation pathway, an aerobic process breaking down fatty acids into acetyl-CoA. Using free coenzyme A/CoA, catalyzes the thiolytic cleavage of medium- to long-chain 3-oxoacyl-CoAs into acetyl-CoA and a fatty acyl-CoA shortened by two carbon atoms. The activity of the enzyme is reversible and it can also catalyze the condensation of two acetyl-CoA molecules into acetoacetyl-CoA. Thereby, it plays a major role in ketone body metabolism. In Mus musculus (Mouse), this protein is Acetyl-CoA acetyltransferase, mitochondrial (Acat1).